A 1165-amino-acid chain; its full sequence is Chitin synthase 3 (1165 aa).

The Cytoplasmic portion of the chain corresponds to 1–170; sequence MTGLNGDDPD…ETNDTLSFWQ (170 aa). Disordered regions lie at residues 19–53 and 74–97; these read DEESLLRSRHSVGSGAPHRQGSLVRPERSRLNNPD and PSSTGVNPNATRRSGSLRSKGSVR. A compositionally biased stretch (polar residues) spans 74 to 92; the sequence is PSSTGVNPNATRRSGSLRS. Lys136 is covalently cross-linked (Glycyl lysine isopeptide (Lys-Gly) (interchain with G-Cter in ubiquitin)). The helical transmembrane segment at 171–191 threads the bilayer; the sequence is MYCYFITFWAPAPILAFCGMP. The Extracellular segment spans residues 192-340; that stretch reads KKERQMAWRE…PNFTVENYAG (149 aa). N-linked (GlcNAc...) asparagine glycans are attached at residues Asn303 and Asn332. The chain crosses the membrane as a helical span at residues 341–354; it reads WNCHTSKEDRDAFY. At 355-452 the chain is on the cytoplasmic side; sequence GLKSKADVYF…SKTVGCIASD (98 aa). The helical transmembrane segment at 453 to 473 threads the bilayer; it reads VVLYVSLVFILSVVIIKFIIA. The Extracellular segment spans residues 474-891; the sequence is CYFRWTVARK…EYYISHHQAK (418 aa). Phosphoserine is present on Ser537. A Phosphothreonine modification is found at Thr538. A helical transmembrane segment spans residues 892 to 910; it reads AFESVFGSVTCLPGCFSMY. The Cytoplasmic segment spans residues 911–1029; the sequence is RIKSPKGSDG…SMQFVIGIEL (119 aa). A helical membrane pass occupies residues 1030 to 1050; that stretch reads IGTMVLPLAICFTIYVIIFAI. The Extracellular segment spans residues 1051–1055; the sequence is VSKPT. Residues 1056–1076 traverse the membrane as a helical segment; that stretch reads PVITLVLLAIILGLPGLIVVI. The Cytoplasmic segment spans residues 1077 to 1165; it reads TATRWSYLWW…RKEESDSFVA (89 aa).

The protein belongs to the chitin synthase family. Class IV subfamily. As to quaternary structure, homodimer. May form higher order oligomers. Seems to interact with BNI4 and SKT5 which link CHS3 to septins. Glycosylated. In terms of processing, palmitoylated by PFA4; required for proper export from the ER.

Its subcellular location is the cell membrane. The protein resides in the bud neck. It localises to the cytoplasmic vesicle membrane. The enzyme catalyses [(1-&gt;4)-N-acetyl-beta-D-glucosaminyl](n) + UDP-N-acetyl-alpha-D-glucosamine = [(1-&gt;4)-N-acetyl-beta-D-glucosaminyl](n+1) + UDP + H(+). In terms of biological role, polymerizes chitin, a structural polymer of the cell wall and septum, by transferring the sugar moiety of UDP-GlcNAc to the non-reducing end of the growing chitin polymer. Appears to be responsible for synthesis of the majority of the chitin found in the cell wall periphery. It is involved in the synthesis of the chitin ring that forms in the cell wall just before bud emergence. This ring remains at the base of the bud as the bud grows and ultimately forms part of the bud scar marking the division site on the mother cell. Also catalyzes the synthesis of chitin laid down during mating and spore cell-wall synthesis. In Saccharomyces cerevisiae (strain ATCC 204508 / S288c) (Baker's yeast), this protein is Chitin synthase 3.